Here is a 182-residue protein sequence, read N- to C-terminus: ATP-dependent protease subunit HslV (182 aa).

Threonine 10 is a catalytic residue. 3 residues coordinate Na(+): alanine 166, cysteine 169, and serine 172.

It belongs to the peptidase T1B family. HslV subfamily. A double ring-shaped homohexamer of HslV is capped on each side by a ring-shaped HslU homohexamer. The assembly of the HslU/HslV complex is dependent on binding of ATP.

The protein resides in the cytoplasm. It carries out the reaction ATP-dependent cleavage of peptide bonds with broad specificity.. Allosterically activated by HslU binding. In terms of biological role, protease subunit of a proteasome-like degradation complex believed to be a general protein degrading machinery. In Rickettsia felis (strain ATCC VR-1525 / URRWXCal2) (Rickettsia azadi), this protein is ATP-dependent protease subunit HslV.